Reading from the N-terminus, the 123-residue chain is Small ribosomal subunit protein uS12cz/uS12cy (123 aa).

This sequence belongs to the universal ribosomal protein uS12 family. As to quaternary structure, part of the 30S ribosomal subunit.

Its subcellular location is the plastid. It localises to the chloroplast. Its function is as follows. With S4 and S5 plays an important role in translational accuracy. Located at the interface of the 30S and 50S subunits. The protein is Small ribosomal subunit protein uS12cz/uS12cy (rps12-A) of Atropa belladonna (Belladonna).